Reading from the N-terminus, the 148-residue chain is Lysozyme C (148 aa).

The first 18 residues, 1–18, serve as a signal peptide directing secretion; sequence MKALTILGLVLLSVTVQG. The 130-residue stretch at 19–148 folds into the C-type lysozyme domain; the sequence is KIFERCELAR…VSQYVKGCGV (130 aa). 4 disulfide bridges follow: Cys24–Cys146, Cys48–Cys134, Cys83–Cys99, and Cys95–Cys113. Residues Glu53 and Asp71 contribute to the active site.

Belongs to the glycosyl hydrolase 22 family. Monomer.

It is found in the secreted. It carries out the reaction Hydrolysis of (1-&gt;4)-beta-linkages between N-acetylmuramic acid and N-acetyl-D-glucosamine residues in a peptidoglycan and between N-acetyl-D-glucosamine residues in chitodextrins.. In terms of biological role, lysozymes have primarily a bacteriolytic function; those in tissues and body fluids are associated with the monocyte-macrophage system and enhance the activity of immunoagents. Also plays a role in digestion in this species. In Semnopithecus entellus (Northern plains gray langur), this protein is Lysozyme C (LYZ).